Here is a 489-residue protein sequence, read N- to C-terminus: Betaine aldehyde dehydrogenase (489 aa).

Thr26 and Asp93 together coordinate K(+). 150-152 (GAW) contributes to the NAD(+) binding site. Residue Lys162 is the Charge relay system of the active site. 176-179 (KPSE) is a binding site for NAD(+). Residue Val180 coordinates K(+). 229–232 (GVET) is a binding site for NAD(+). Leu245 is a K(+) binding site. Glu251 functions as the Proton acceptor in the catalytic mechanism. Gly253, Cys285, and Glu386 together coordinate NAD(+). Cys285 functions as the Nucleophile in the catalytic mechanism. At Cys285 the chain carries Cysteine sulfenic acid (-SOH). The K(+) site is built by Lys456 and Gly459. Glu463 serves as the catalytic Charge relay system.

The protein belongs to the aldehyde dehydrogenase family. In terms of assembly, dimer of dimers. K(+) serves as cofactor.

It carries out the reaction betaine aldehyde + NAD(+) + H2O = glycine betaine + NADH + 2 H(+). The protein operates within amine and polyamine biosynthesis; betaine biosynthesis via choline pathway; betaine from betaine aldehyde: step 1/1. Its function is as follows. Involved in the biosynthesis of the osmoprotectant glycine betaine. Catalyzes the irreversible oxidation of betaine aldehyde to the corresponding acid. The sequence is that of Betaine aldehyde dehydrogenase from Burkholderia cenocepacia (strain ATCC BAA-245 / DSM 16553 / LMG 16656 / NCTC 13227 / J2315 / CF5610) (Burkholderia cepacia (strain J2315)).